We begin with the raw amino-acid sequence, 332 residues long: L-lactate dehydrogenase A chain (332 aa).

The residue at position 2 (alanine 2) is an N-acetylalanine. Position 5 is an N6-acetyllysine; alternate (lysine 5). Lysine 5 carries the post-translational modification N6-succinyllysine; alternate. At lysine 14 the chain carries N6-acetyllysine. Threonine 18 carries the phosphothreonine modification. 29–57 (GAVGMACAISILMKDLADELALVDVIEDK) contributes to the NAD(+) binding site. The residue at position 57 (lysine 57) is an N6-acetyllysine; alternate. Lysine 57 is covalently cross-linked (Glycyl lysine isopeptide (Lys-Gly) (interchain with G-Cter in SUMO2); alternate). An N6-acetyllysine modification is found at lysine 81. NAD(+) is bound at residue arginine 99. Substrate is bound at residue arginine 106. Lysine 118 carries the post-translational modification N6-acetyllysine; alternate. Residue lysine 118 is modified to N6-succinyllysine; alternate. Lysine 126 is modified (N6-acetyllysine). Positions 138 and 169 each coordinate substrate. Residue histidine 193 is the Proton acceptor of the active site. Residues lysine 224 and lysine 232 each carry the N6-acetyllysine modification. At tyrosine 239 the chain carries Phosphotyrosine. Lysine 243 is modified (N6-acetyllysine). Position 248 (threonine 248) interacts with substrate. A Phosphothreonine modification is found at threonine 309. The residue at position 310 (serine 310) is a Phosphoserine. Lysine 318 is subject to N6-acetyllysine; alternate. Lysine 318 bears the N6-succinyllysine; alternate mark. The residue at position 322 (threonine 322) is a Phosphothreonine.

This sequence belongs to the LDH/MDH superfamily. LDH family. As to quaternary structure, homotetramer. Interacts with PTEN upstream reading frame protein MP31. In terms of processing, ISGylated.

The protein localises to the cytoplasm. The enzyme catalyses (S)-lactate + NAD(+) = pyruvate + NADH + H(+). The protein operates within fermentation; pyruvate fermentation to lactate; (S)-lactate from pyruvate: step 1/1. In terms of biological role, interconverts simultaneously and stereospecifically pyruvate and lactate with concomitant interconversion of NADH and NAD(+). This is L-lactate dehydrogenase A chain (LDHA) from Pan troglodytes (Chimpanzee).